Consider the following 154-residue polypeptide: Probable biofilm-surface layer protein B (154 aa).

Residues methionine 1–alanine 30 form the signal peptide.

It belongs to the BslA/BslB family. As to quaternary structure, monomer in vitro.

The protein localises to the secreted. Has a minor role in biofilm architecture. May contribute to the surface hydrophobicity. This is Probable biofilm-surface layer protein B from Bacillus subtilis (strain 168).